The sequence spans 209 residues: Thymidylate kinase (209 aa).

13–20 provides a ligand contact to ATP; it reads GLEGAGKS.

This sequence belongs to the thymidylate kinase family.

The enzyme catalyses dTMP + ATP = dTDP + ADP. Phosphorylation of dTMP to form dTDP in both de novo and salvage pathways of dTTP synthesis. This Shewanella sp. (strain MR-4) protein is Thymidylate kinase.